The sequence spans 317 residues: Probable methyltransferase tdiE (317 aa).

This sequence belongs to the methyltransferase superfamily. LaeA methyltransferase family.

It participates in secondary metabolite biosynthesis. Its function is as follows. Probable methyltransferase; part of the gene cluster that mediates the biosynthesis of terrequinone A, an antitumor agent. The first step in the biosynthetic pathway for terrequinone A is formation of indole pyruvic acid (IPA) from L-tryptophan by the aminotransferase tdiD. The nonribosomal peptide synthase tdiA then immediately converts unstable IPA to didemethylasterriquinone D (DDAQ D), via condensation of 2 IPA molecules. The symmetric connectivity of the 2 IPA molecules is thought to arise by head-to-tail dual Claisen condensations facilitated by the TE domain. TdiB then catalyzes reverse prenylation by transferring dimethylallyl diphosphate to carbon atom 2' of DDAQ D, to yield asterriquinone C-1. Finally, tdiC and tdiE enzymes robustly convert asterriquinone C-1 to terrequinone A via a transformation involving regular prenylation at carbon atom 5, which requires elimination of the hydroxy group on C-5. The chain is Probable methyltransferase tdiE from Emericella nidulans (strain FGSC A4 / ATCC 38163 / CBS 112.46 / NRRL 194 / M139) (Aspergillus nidulans).